Here is a 183-residue protein sequence, read N- to C-terminus: Endoribonuclease YbeY (183 aa).

Zn(2+)-binding residues include His143, His147, and His153.

This sequence belongs to the endoribonuclease YbeY family. Requires Zn(2+) as cofactor.

It is found in the cytoplasm. Functionally, single strand-specific metallo-endoribonuclease involved in late-stage 70S ribosome quality control and in maturation of the 3' terminus of the 16S rRNA. The protein is Endoribonuclease YbeY of Rickettsia bellii (strain OSU 85-389).